Here is a 220-residue protein sequence, read N- to C-terminus: Deoxyribose-phosphate aldolase (220 aa).

Residue aspartate 89 is the Proton donor/acceptor of the active site. Lysine 151 functions as the Schiff-base intermediate with acetaldehyde in the catalytic mechanism. Lysine 180 acts as the Proton donor/acceptor in catalysis.

Belongs to the DeoC/FbaB aldolase family. DeoC type 1 subfamily.

The protein resides in the cytoplasm. It carries out the reaction 2-deoxy-D-ribose 5-phosphate = D-glyceraldehyde 3-phosphate + acetaldehyde. The protein operates within carbohydrate degradation; 2-deoxy-D-ribose 1-phosphate degradation; D-glyceraldehyde 3-phosphate and acetaldehyde from 2-deoxy-alpha-D-ribose 1-phosphate: step 2/2. Functionally, catalyzes a reversible aldol reaction between acetaldehyde and D-glyceraldehyde 3-phosphate to generate 2-deoxy-D-ribose 5-phosphate. In Bdellovibrio bacteriovorus (strain ATCC 15356 / DSM 50701 / NCIMB 9529 / HD100), this protein is Deoxyribose-phosphate aldolase.